The primary structure comprises 141 residues: Putative nickel-responsive regulator (141 aa).

Residues histidine 80, histidine 91, histidine 93, and cysteine 99 each contribute to the Ni(2+) site.

Belongs to the transcriptional regulatory CopG/NikR family. It depends on Ni(2+) as a cofactor.

Transcriptional regulator. The chain is Putative nickel-responsive regulator from Methanococcus maripaludis (strain C6 / ATCC BAA-1332).